The following is an 87-amino-acid chain: Small ribosomal subunit protein uS15 (87 aa).

This sequence belongs to the universal ribosomal protein uS15 family. In terms of assembly, part of the 30S ribosomal subunit. Forms a bridge to the 50S subunit in the 70S ribosome, contacting the 23S rRNA.

One of the primary rRNA binding proteins, it binds directly to 16S rRNA where it helps nucleate assembly of the platform of the 30S subunit by binding and bridging several RNA helices of the 16S rRNA. Functionally, forms an intersubunit bridge (bridge B4) with the 23S rRNA of the 50S subunit in the ribosome. The sequence is that of Small ribosomal subunit protein uS15 from Dehalococcoides mccartyi (strain ATCC BAA-2100 / JCM 16839 / KCTC 5957 / BAV1).